Here is a 190-residue protein sequence, read N- to C-terminus: Peptidyl-tRNA hydrolase (190 aa).

F14 is a binding site for tRNA. Catalysis depends on H19, which acts as the Proton acceptor. Positions 64, 66, and 112 each coordinate tRNA.

The protein belongs to the PTH family. In terms of assembly, monomer.

Its subcellular location is the cytoplasm. The enzyme catalyses an N-acyl-L-alpha-aminoacyl-tRNA + H2O = an N-acyl-L-amino acid + a tRNA + H(+). Its function is as follows. Hydrolyzes ribosome-free peptidyl-tRNAs (with 1 or more amino acids incorporated), which drop off the ribosome during protein synthesis, or as a result of ribosome stalling. In terms of biological role, catalyzes the release of premature peptidyl moieties from peptidyl-tRNA molecules trapped in stalled 50S ribosomal subunits, and thus maintains levels of free tRNAs and 50S ribosomes. The polypeptide is Peptidyl-tRNA hydrolase (Staphylococcus epidermidis (strain ATCC 35984 / DSM 28319 / BCRC 17069 / CCUG 31568 / BM 3577 / RP62A)).